Here is a 180-residue protein sequence, read N- to C-terminus: Oligoribonuclease (180 aa).

The region spanning 7–170 is the Exonuclease domain; sequence LIWIDLEMTG…DDIRESIAEL (164 aa). Tyr-128 is a catalytic residue.

This sequence belongs to the oligoribonuclease family.

The protein resides in the cytoplasm. 3'-to-5' exoribonuclease specific for small oligoribonucleotides. The protein is Oligoribonuclease of Ectopseudomonas mendocina (strain ymp) (Pseudomonas mendocina).